A 221-amino-acid chain; its full sequence is Iron-sulfur cluster repair protein YtfE (221 aa).

This sequence belongs to the RIC family. YtfE subfamily. As to quaternary structure, homodimer.

Its subcellular location is the cytoplasm. In terms of biological role, di-iron-containing protein involved in the repair of iron-sulfur clusters damaged by oxidative and nitrosative stress conditions. The protein is Iron-sulfur cluster repair protein YtfE of Pectobacterium carotovorum subsp. carotovorum (strain PC1).